We begin with the raw amino-acid sequence, 111 residues long: Urease subunit beta (111 aa).

The protein belongs to the urease beta subunit family. As to quaternary structure, heterotrimer of UreA (gamma), UreB (beta) and UreC (alpha) subunits. Three heterotrimers associate to form the active enzyme.

Its subcellular location is the cytoplasm. The enzyme catalyses urea + 2 H2O + H(+) = hydrogencarbonate + 2 NH4(+). It functions in the pathway nitrogen metabolism; urea degradation; CO(2) and NH(3) from urea (urease route): step 1/1. The protein is Urease subunit beta of Geobacillus kaustophilus (strain HTA426).